The primary structure comprises 426 residues: Bifunctional protein GlmU (426 aa).

Positions 1-216 (MSEVDVVILA…WHDILGVNTQ (216 aa)) are pyrophosphorylase. UDP-N-acetyl-alpha-D-glucosamine contacts are provided by residues 9–12 (LAAG), K23, and Q69. D97 contacts Mg(2+). Positions 132, 148, 163, and 214 each coordinate UDP-N-acetyl-alpha-D-glucosamine. Residue N214 participates in Mg(2+) binding. The interval 217–237 (QQLAAVSKIARKRINDQIMAN) is linker. Positions 238–426 (GVTMIDPLTT…AKHDQRDDQP (189 aa)) are N-acetyltransferase. R286 and K304 together coordinate UDP-N-acetyl-alpha-D-glucosamine. H316 functions as the Proton acceptor in the catalytic mechanism. UDP-N-acetyl-alpha-D-glucosamine-binding residues include Y319 and N330. Residues A333, 339–340 (NY), S358, A376, and R393 each bind acetyl-CoA.

It in the N-terminal section; belongs to the N-acetylglucosamine-1-phosphate uridyltransferase family. The protein in the C-terminal section; belongs to the transferase hexapeptide repeat family. In terms of assembly, homotrimer. Mg(2+) is required as a cofactor.

It localises to the cytoplasm. The catalysed reaction is alpha-D-glucosamine 1-phosphate + acetyl-CoA = N-acetyl-alpha-D-glucosamine 1-phosphate + CoA + H(+). It catalyses the reaction N-acetyl-alpha-D-glucosamine 1-phosphate + UTP + H(+) = UDP-N-acetyl-alpha-D-glucosamine + diphosphate. It participates in nucleotide-sugar biosynthesis; UDP-N-acetyl-alpha-D-glucosamine biosynthesis; N-acetyl-alpha-D-glucosamine 1-phosphate from alpha-D-glucosamine 6-phosphate (route II): step 2/2. The protein operates within nucleotide-sugar biosynthesis; UDP-N-acetyl-alpha-D-glucosamine biosynthesis; UDP-N-acetyl-alpha-D-glucosamine from N-acetyl-alpha-D-glucosamine 1-phosphate: step 1/1. Its pathway is bacterial outer membrane biogenesis; LPS lipid A biosynthesis. Catalyzes the last two sequential reactions in the de novo biosynthetic pathway for UDP-N-acetylglucosamine (UDP-GlcNAc). The C-terminal domain catalyzes the transfer of acetyl group from acetyl coenzyme A to glucosamine-1-phosphate (GlcN-1-P) to produce N-acetylglucosamine-1-phosphate (GlcNAc-1-P), which is converted into UDP-GlcNAc by the transfer of uridine 5-monophosphate (from uridine 5-triphosphate), a reaction catalyzed by the N-terminal domain. This chain is Bifunctional protein GlmU, found in Oenococcus oeni (strain ATCC BAA-331 / PSU-1).